The primary structure comprises 274 residues: WIMGHMVNGLEQVSEFLNLGANAIEFDIDFDNNGIAKITHHGIPCDCGRLCTKQTVFTEYLDNIRHVTTPGDPKFREQLILLALDLKLQRIPVEKAYAAGVDVATKLLDHYWQRGKSKARAYILLNIPLVEDYEFIRAFKDMLKNEGYEQYNDKVGVNFTGNEDLDEIRKVLEKVGVDKHVWQADGITSCFTRGTDRLTEALKRRDTPGYNYAYKVYAWTLVKYSTMRRSLRLGVDGVMSNYPDRVVEVLKEEEFAGKFRMATYDDNPWKKFTS.

The active site involves H5. Residues E25 and D27 each coordinate Mg(2+). The active-site Nucleophile is H41. Intrachain disulfides connect C45/C51 and C47/C190. D85 is a Mg(2+) binding site.

This sequence belongs to the arthropod phospholipase D family. Class II subfamily. Mg(2+) is required as a cofactor. As to expression, expressed by the venom gland.

Its subcellular location is the secreted. It catalyses the reaction an N-(acyl)-sphingosylphosphocholine = an N-(acyl)-sphingosyl-1,3-cyclic phosphate + choline. The enzyme catalyses an N-(acyl)-sphingosylphosphoethanolamine = an N-(acyl)-sphingosyl-1,3-cyclic phosphate + ethanolamine. It carries out the reaction a 1-acyl-sn-glycero-3-phosphocholine = a 1-acyl-sn-glycero-2,3-cyclic phosphate + choline. The catalysed reaction is a 1-acyl-sn-glycero-3-phosphoethanolamine = a 1-acyl-sn-glycero-2,3-cyclic phosphate + ethanolamine. Functionally, dermonecrotic toxins cleave the phosphodiester linkage between the phosphate and headgroup of certain phospholipids (sphingolipid and lysolipid substrates), forming an alcohol (often choline) and a cyclic phosphate. This toxin acts on sphingomyelin (SM). It may also act on ceramide phosphoethanolamine (CPE), lysophosphatidylcholine (LPC) and lysophosphatidylethanolamine (LPE), but not on lysophosphatidylserine (LPS), and lysophosphatidylglycerol (LPG). It acts by transphosphatidylation, releasing exclusively cyclic phosphate products as second products. Induces dermonecrosis, hemolysis, increased vascular permeability, edema, inflammatory response, and platelet aggregation. This Sicarius albospinosus (Six-eyed crab spider) protein is Dermonecrotic toxin SaSicTox-betaIIB1.